A 204-amino-acid chain; its full sequence is Small ribosomal subunit protein uS4 (204 aa).

The 62-residue stretch at 92-153 (RRLDALVLRS…RSKEKTLFTI (62 aa)) folds into the S4 RNA-binding domain.

The protein belongs to the universal ribosomal protein uS4 family. In terms of assembly, part of the 30S ribosomal subunit. Contacts protein S5. The interaction surface between S4 and S5 is involved in control of translational fidelity.

In terms of biological role, one of the primary rRNA binding proteins, it binds directly to 16S rRNA where it nucleates assembly of the body of the 30S subunit. Functionally, with S5 and S12 plays an important role in translational accuracy. This Streptomyces coelicolor (strain ATCC BAA-471 / A3(2) / M145) protein is Small ribosomal subunit protein uS4.